The chain runs to 104 residues: UPF0125 protein PSPTO_4512 (104 aa).

Belongs to the UPF0125 (RnfH) family.

This chain is UPF0125 protein PSPTO_4512, found in Pseudomonas syringae pv. tomato (strain ATCC BAA-871 / DC3000).